The chain runs to 34 residues: NU-buthitoxin-Ptr1a (34 aa).

Intrachain disulfides connect Cys-6–Cys-27, Cys-12–Cys-32, and Cys-16–Cys-34.

Expressed by the venom gland.

It localises to the secreted. Functionally, toxin that acts as an agonist on melanocortin receptors (MC1R, MC3R, MC5R, MC5R). After binding to MC1R, the peptide activates the hMC1R/Gs pathway, but after binding to MC4R, it is not able to activate or antagonize the MC4R/Gs pathway. Inhibits melanocyte stimulating hormone (MSH)-binding to human receptors (Ki=2.9 uM to MC1R, Ki=3.9 uM to MC3R, Ki=2.6 uM to MC4R, Ki=2.2 uM to MC5R). This toxin is structurally unrelated to the natural agonists. The protein is NU-buthitoxin-Ptr1a of Parabuthus transvaalicus (Transvaal thick-tailed scorpion).